A 114-amino-acid polypeptide reads, in one-letter code: uncharacterized protein (114 aa).

3 helical membrane-spanning segments follow: residues 38 to 60, 64 to 86, and 91 to 113; these read PLWF…TAGI, YAAI…AHMF, and SVIM…MGSY.

The protein resides in the cell membrane. This is an uncharacterized protein from Bacillus subtilis (strain 168).